The sequence spans 316 residues: Epiphycan (316 aa).

Residues 1 to 23 (MKTFVNIFLGFFIFESVGAVPIT) form the signal peptide. Serine 98 is a glycosylation site (O-linked (Xyl...) (dermatan sulfate) serine). Residues 100-137 (VLVPQTQDGLPTCLLCTCLGTTVYCDDRELDAVPPLPK) enclose the LRRNT domain. The cysteines at positions 112 and 124 are disulfide-linked. LRR repeat units follow at residues 138–159 (NTMY…DFAN), 162–183 (NLKR…AFRR), 186–207 (QLLE…PSTL), 232–252 (ELQH…PLPE), 253–274 (SLQA…TFCK), and 284–304 (ALED…PYAY). Residues cysteine 273 and cysteine 306 are joined by a disulfide bond. Asparagine 296 carries an N-linked (GlcNAc...) asparagine glycan.

Belongs to the small leucine-rich proteoglycan (SLRP) family. SLRP class III subfamily. The O-linked glycosaminoglycan chain(s) are dermatan sulfate. Preferentially expressed in flattened chondrocytes of developing chick limb cartilage. Also found in the cartilage peripheral zone bordering with bone marrow cavity.

Its subcellular location is the secreted. The protein resides in the extracellular space. The protein localises to the extracellular matrix. In terms of biological role, may have a role in bone formation and also in establishing the ordered structure of cartilage through matrix organization. In Gallus gallus (Chicken), this protein is Epiphycan (EPYC).